We begin with the raw amino-acid sequence, 48 residues long: Cytochrome b559 subunit beta (48 aa).

A helical transmembrane segment spans residues 23–39 (WLAVHALAIPTVFFLGA). His-27 lines the heme pocket.

This sequence belongs to the PsbE/PsbF family. Heterodimer of an alpha subunit and a beta subunit. PSII is composed of 1 copy each of membrane proteins PsbA, PsbB, PsbC, PsbD, PsbE, PsbF, PsbH, PsbI, PsbJ, PsbK, PsbL, PsbM, PsbT, PsbX, PsbY, Psb30/Ycf12, peripheral proteins PsbO, CyanoQ (PsbQ), PsbU, PsbV and a large number of cofactors. It forms dimeric complexes. Requires heme b as cofactor.

Its subcellular location is the cellular thylakoid membrane. Its function is as follows. This b-type cytochrome is tightly associated with the reaction center of photosystem II (PSII). PSII is a light-driven water:plastoquinone oxidoreductase that uses light energy to abstract electrons from H(2)O, generating O(2) and a proton gradient subsequently used for ATP formation. It consists of a core antenna complex that captures photons, and an electron transfer chain that converts photonic excitation into a charge separation. The chain is Cytochrome b559 subunit beta from Prochlorococcus marinus (strain SARG / CCMP1375 / SS120).